The chain runs to 119 residues: UPF0102 protein GFO_3098 (119 aa).

Belongs to the UPF0102 family.

This Christiangramia forsetii (strain DSM 17595 / CGMCC 1.15422 / KT0803) (Gramella forsetii) protein is UPF0102 protein GFO_3098.